The chain runs to 713 residues: Phosphoribosylformylglycinamidine synthase subunit PurL (713 aa).

The active site involves His32. Tyr35 provides a ligand contact to ATP. Residue Glu76 coordinates Mg(2+). Residues 77–80 and Arg99 each bind substrate; that span reads SHNH. Catalysis depends on His78, which acts as the Proton acceptor. A Mg(2+)-binding site is contributed by Asp100. Gln224 serves as a coordination point for substrate. Residue Asp252 participates in Mg(2+) binding. 296-298 serves as a coordination point for substrate; it reads ESQ. ATP is bound by residues Asp471 and Gly508. Asn509 serves as a coordination point for Mg(2+). Position 511 (Ser511) interacts with substrate.

The protein belongs to the FGAMS family. In terms of assembly, monomer. Part of the FGAM synthase complex composed of 1 PurL, 1 PurQ and 2 PurS subunits.

The protein localises to the cytoplasm. The catalysed reaction is N(2)-formyl-N(1)-(5-phospho-beta-D-ribosyl)glycinamide + L-glutamine + ATP + H2O = 2-formamido-N(1)-(5-O-phospho-beta-D-ribosyl)acetamidine + L-glutamate + ADP + phosphate + H(+). The protein operates within purine metabolism; IMP biosynthesis via de novo pathway; 5-amino-1-(5-phospho-D-ribosyl)imidazole from N(2)-formyl-N(1)-(5-phospho-D-ribosyl)glycinamide: step 1/2. In terms of biological role, part of the phosphoribosylformylglycinamidine synthase complex involved in the purines biosynthetic pathway. Catalyzes the ATP-dependent conversion of formylglycinamide ribonucleotide (FGAR) and glutamine to yield formylglycinamidine ribonucleotide (FGAM) and glutamate. The FGAM synthase complex is composed of three subunits. PurQ produces an ammonia molecule by converting glutamine to glutamate. PurL transfers the ammonia molecule to FGAR to form FGAM in an ATP-dependent manner. PurS interacts with PurQ and PurL and is thought to assist in the transfer of the ammonia molecule from PurQ to PurL. This is Phosphoribosylformylglycinamidine synthase subunit PurL from Thermococcus kodakarensis (strain ATCC BAA-918 / JCM 12380 / KOD1) (Pyrococcus kodakaraensis (strain KOD1)).